The following is a 472-amino-acid chain: Deoxyribodipyrimidine photo-lyase (472 aa).

Residues 2 to 134 (TTHLVWFRQD…VCEGFDDSVI (133 aa)) enclose the Photolyase/cryptochrome alpha/beta domain. Residues Asn109 and Glu110 each contribute to the (6R)-5,10-methylene-5,6,7,8-tetrahydrofolate site. Position 223 (Tyr223) interacts with FAD. Arg227 contacts DNA. FAD is bound by residues 235–239 (TSRLS), Trp272, and 275–282 (ELIWREFY). 2 interaction with DNA regions span residues 275 to 282 (ELIWREFY) and 342 to 343 (NR). 373–375 (DGD) serves as a coordination point for FAD. Gln405 is a binding site for DNA.

Belongs to the DNA photolyase class-1 family. Monomer. FAD serves as cofactor. The cofactor is (6R)-5,10-methylene-5,6,7,8-tetrahydrofolate.

It catalyses the reaction cyclobutadipyrimidine (in DNA) = 2 pyrimidine residues (in DNA).. In terms of biological role, involved in repair of UV radiation-induced DNA damage. Catalyzes the light-dependent monomerization (300-600 nm) of cyclobutyl pyrimidine dimers (in cis-syn configuration), which are formed between adjacent bases on the same DNA strand upon exposure to ultraviolet radiation. This Escherichia coli (strain K12) protein is Deoxyribodipyrimidine photo-lyase (phrB).